Consider the following 364-residue polypeptide: Carbamoyl phosphate synthase small chain (364 aa).

2 CPSase regions span residues 1–167 (MKRQ…PSPG) and 1–171 (MKRQ…RGER). The L-glutamine site is built by serine 45, glycine 219, and glycine 221. Residues 171–358 (RIVLIDFGMK…LALIREFNKK (188 aa)) enclose the Glutamine amidotransferase type-1 domain. Cysteine 246 serves as the catalytic Nucleophile. L-glutamine-binding residues include leucine 247, glutamine 250, asparagine 288, glycine 290, and tyrosine 291. Active-site residues include histidine 331 and glutamate 333.

The protein belongs to the CarA family. Composed of two chains; the small (or glutamine) chain promotes the hydrolysis of glutamine to ammonia, which is used by the large (or ammonia) chain to synthesize carbamoyl phosphate. Tetramer of heterodimers (alpha,beta)4.

It carries out the reaction hydrogencarbonate + L-glutamine + 2 ATP + H2O = carbamoyl phosphate + L-glutamate + 2 ADP + phosphate + 2 H(+). It catalyses the reaction L-glutamine + H2O = L-glutamate + NH4(+). It participates in amino-acid biosynthesis; L-arginine biosynthesis; carbamoyl phosphate from bicarbonate: step 1/1. The protein operates within pyrimidine metabolism; UMP biosynthesis via de novo pathway; (S)-dihydroorotate from bicarbonate: step 1/3. Functionally, small subunit of the glutamine-dependent carbamoyl phosphate synthetase (CPSase). CPSase catalyzes the formation of carbamoyl phosphate from the ammonia moiety of glutamine, carbonate, and phosphate donated by ATP, constituting the first step of 2 biosynthetic pathways, one leading to arginine and/or urea and the other to pyrimidine nucleotides. The small subunit (glutamine amidotransferase) binds and cleaves glutamine to supply the large subunit with the substrate ammonia. In Bacillus caldolyticus, this protein is Carbamoyl phosphate synthase small chain.